We begin with the raw amino-acid sequence, 204 residues long: N-(5'-phosphoribosyl)anthranilate isomerase (204 aa).

Belongs to the TrpF family.

The catalysed reaction is N-(5-phospho-beta-D-ribosyl)anthranilate = 1-(2-carboxyphenylamino)-1-deoxy-D-ribulose 5-phosphate. It participates in amino-acid biosynthesis; L-tryptophan biosynthesis; L-tryptophan from chorismate: step 3/5. The protein is N-(5'-phosphoribosyl)anthranilate isomerase of Bacillus thuringiensis (strain Al Hakam).